A 510-amino-acid chain; its full sequence is GTPase Der (510 aa).

2 EngA-type G domains span residues 3–167 (LKLA…GPEA) and 230–405 (IRLA…KDWT). GTP is bound by residues 9 to 16 (GRPNVGKS), 56 to 60 (DTAGF), 119 to 122 (NKAE), 236 to 243 (GRPNAGKS), 283 to 287 (DTAGL), and 348 to 351 (SKWD). The 85-residue stretch at 406–490 (ARAKTGDLNR…PIRLFVRQGK (85 aa)) folds into the KH-like domain.

Belongs to the TRAFAC class TrmE-Era-EngA-EngB-Septin-like GTPase superfamily. EngA (Der) GTPase family. In terms of assembly, associates with the 50S ribosomal subunit.

GTPase that plays an essential role in the late steps of ribosome biogenesis. This chain is GTPase Der, found in Hyphomonas neptunium (strain ATCC 15444).